The chain runs to 186 residues: Ribosome-recycling factor (186 aa).

Belongs to the RRF family.

The protein localises to the cytoplasm. Functionally, responsible for the release of ribosomes from messenger RNA at the termination of protein biosynthesis. May increase the efficiency of translation by recycling ribosomes from one round of translation to another. This is Ribosome-recycling factor from Acidovorax ebreus (strain TPSY) (Diaphorobacter sp. (strain TPSY)).